Reading from the N-terminus, the 814-residue chain is Phenylalanine--tRNA ligase beta subunit (814 aa).

The tRNA-binding domain maps to 39 to 153 (SKNVNGVVLG…LKHELGTPVS (115 aa)). In terms of domain architecture, B5 spans 414 to 500 (NEDIFIKLRR…RLIGYDRFDL (87 aa)). The Mg(2+) site is built by aspartate 478, aspartate 484, glutamate 487, and glutamate 488. In terms of domain architecture, FDX-ACB spans 720–813 (PIVPKIERDI…IEKSFQTKLR (94 aa)).

The protein belongs to the phenylalanyl-tRNA synthetase beta subunit family. Type 1 subfamily. Tetramer of two alpha and two beta subunits. Mg(2+) serves as cofactor.

It is found in the cytoplasm. It catalyses the reaction tRNA(Phe) + L-phenylalanine + ATP = L-phenylalanyl-tRNA(Phe) + AMP + diphosphate + H(+). The chain is Phenylalanine--tRNA ligase beta subunit from Prochlorococcus marinus (strain MIT 9312).